Consider the following 208-residue polypeptide: Ribosomal RNA large subunit methyltransferase E (208 aa).

G63, W65, D83, D99, and D124 together coordinate S-adenosyl-L-methionine. K164 functions as the Proton acceptor in the catalytic mechanism.

It belongs to the class I-like SAM-binding methyltransferase superfamily. RNA methyltransferase RlmE family.

It is found in the cytoplasm. It carries out the reaction uridine(2552) in 23S rRNA + S-adenosyl-L-methionine = 2'-O-methyluridine(2552) in 23S rRNA + S-adenosyl-L-homocysteine + H(+). Functionally, specifically methylates the uridine in position 2552 of 23S rRNA at the 2'-O position of the ribose in the fully assembled 50S ribosomal subunit. The chain is Ribosomal RNA large subunit methyltransferase E from Salmonella arizonae (strain ATCC BAA-731 / CDC346-86 / RSK2980).